Here is a 504-residue protein sequence, read N- to C-terminus: Glucose-6-phosphate isomerase (504 aa).

Catalysis depends on glutamate 333, which acts as the Proton donor. Active-site residues include histidine 364 and lysine 473.

This sequence belongs to the GPI family.

Its subcellular location is the cytoplasm. It carries out the reaction alpha-D-glucose 6-phosphate = beta-D-fructose 6-phosphate. It participates in carbohydrate biosynthesis; gluconeogenesis. The protein operates within carbohydrate degradation; glycolysis; D-glyceraldehyde 3-phosphate and glycerone phosphate from D-glucose: step 2/4. Functionally, catalyzes the reversible isomerization of glucose-6-phosphate to fructose-6-phosphate. This Stenotrophomonas maltophilia (strain K279a) protein is Glucose-6-phosphate isomerase.